We begin with the raw amino-acid sequence, 182 residues long: Hexose transport activator protein (182 aa).

The interval 46–65 (GIWGPMEKKPGGVGKKKGSE) is disordered.

Multicopy expression suppresses glucose-uptake defects in various yeast mutants. This is Hexose transport activator protein (AHT1) from Saccharomyces cerevisiae (strain ATCC 204508 / S288c) (Baker's yeast).